The following is a 316-amino-acid chain: Pantothenate kinase (316 aa).

Residue G95–S102 coordinates ATP.

It belongs to the prokaryotic pantothenate kinase family.

The protein localises to the cytoplasm. The catalysed reaction is (R)-pantothenate + ATP = (R)-4'-phosphopantothenate + ADP + H(+). It functions in the pathway cofactor biosynthesis; coenzyme A biosynthesis; CoA from (R)-pantothenate: step 1/5. The polypeptide is Pantothenate kinase (coaA) (Halalkalibacterium halodurans (strain ATCC BAA-125 / DSM 18197 / FERM 7344 / JCM 9153 / C-125) (Bacillus halodurans)).